Consider the following 510-residue polypeptide: MAKKPVMLMILDGFGISDKVDGNAVKAASKPNFDKYFNNYPHTHLGASGLSVGLPDGQMGNSEVGHLNIGAGRIVYQSLTKITKAIEDGDFFKNAALNKAVNNVLENDSTLHLMGLLSPGGVHSHTNHLKGLLQLAKKKNVKKVFVHAFLDGRDVPPSSAKEFIKDIEDYMNEIGLGEIATVSGRYYAMDRDNRWEREELAYNAMVLGKGEEAESAIKAVDASYHDNKTDEFVLPTVIVKEGKPVATIKDKDSVIFFNFRPDRARQITRAIAEEAFDGFKRDRLNIEFVTMTEYDASFKGVDVAFGPENITNTLGEYVSNKGLNQLRIAETEKYAHVTFFFNGGVEEPNKNEDRALISSPKVATYDLKPEMSAYEVTDELLKRLDEDKYDMVILNFANPDMVGHTGILEAAKKAVETVDECLGKIVDKVLKLDGSVFITADHGNSEQMIDYSNGKPMTAHTVNPVPFVYVSNHTEAKKLNEGVLADIAPTMLQEMGLEKPEEMTGKSLFE.

Mn(2+) contacts are provided by Asp12 and Ser62. Residue Ser62 is the Phosphoserine intermediate of the active site. Substrate is bound by residues His123, 153–154 (RD), Arg185, Arg191, 260–263 (RPDR), and Lys333. Mn(2+) is bound by residues Asp400, His404, Asp441, His442, and His460.

The protein belongs to the BPG-independent phosphoglycerate mutase family. Monomer. The cofactor is Mn(2+).

It catalyses the reaction (2R)-2-phosphoglycerate = (2R)-3-phosphoglycerate. The protein operates within carbohydrate degradation; glycolysis; pyruvate from D-glyceraldehyde 3-phosphate: step 3/5. In terms of biological role, catalyzes the interconversion of 2-phosphoglycerate and 3-phosphoglycerate. This chain is 2,3-bisphosphoglycerate-independent phosphoglycerate mutase, found in Clostridium acetobutylicum (strain ATCC 824 / DSM 792 / JCM 1419 / IAM 19013 / LMG 5710 / NBRC 13948 / NRRL B-527 / VKM B-1787 / 2291 / W).